The sequence spans 297 residues: rRNA 2'-O-methyltransferase fibrillarin (297 aa).

The segment at Met1–Gly56 is disordered. 13 positions are modified to asymmetric dimethylarginine: Arg2, Arg7, Arg12, Arg16, Arg19, Arg24, Arg28, Arg32, Arg36, Arg40, Arg44, Arg48, and Arg52. Residues Thr149–Thr150, Glu168–Phe169, Asp192–Ala193, and Asp212–Gln215 contribute to the S-adenosyl-L-methionine site.

Belongs to the methyltransferase superfamily. Fibrillarin family. As to quaternary structure, component of box C/D small nucleolar ribonucleoprotein (snoRNP) particles. It is associated with the U3, U8 and U13 small nuclear RNAs. In terms of processing, by homology to other fibrillarins, some or all of the N-terminal domain arginines are modified to asymmetric dimethylarginine (DMA).

Its subcellular location is the nucleus. The protein localises to the nucleolus. The enzyme catalyses L-glutaminyl-[histone H2A] + S-adenosyl-L-methionine = N(5)-methyl-L-glutaminyl-[histone H2A] + S-adenosyl-L-homocysteine + H(+). S-adenosyl-L-methionine-dependent methyltransferase that has the ability to methylate both RNAs and proteins. Involved in pre-rRNA processing. Utilizes the methyl donor S-adenosyl-L-methionine to catalyze the site-specific 2'-hydroxyl methylation of ribose moieties in pre-ribosomal RNA. Site specificity is provided by a guide RNA that base pairs with the substrate. Methylation occurs at a characteristic distance from the sequence involved in base pairing with the guide RNA. Also acts as a protein methyltransferase by mediating methylation of 'Gln-105' of histone H2A (H2AQ105me), a modification that impairs binding of the FACT complex and is specifically present at 35S ribosomal DNA locus. The polypeptide is rRNA 2'-O-methyltransferase fibrillarin (Leishmania major).